The sequence spans 75 residues: uncharacterized protein (75 aa).

One can recognise a Glutaredoxin domain in the interval 1–75 (MIKIYSTPTC…KAEIDKLIEK (75 aa)). C10 and C13 are joined by a disulfide.

The protein belongs to the glutaredoxin family.

This is an uncharacterized protein from Clostridium pasteurianum.